Here is a 164-residue protein sequence, read N- to C-terminus: Ubiquitin-fold modifier-conjugating enzyme 1 (164 aa).

C116 (glycyl thioester intermediate) is an active-site residue.

It belongs to the ubiquitin-conjugating enzyme family. UFC1 subfamily.

Functionally, E2-like enzyme which forms an intermediate with UFM1 via a thioester linkage. The sequence is that of Ubiquitin-fold modifier-conjugating enzyme 1 from Drosophila sechellia (Fruit fly).